A 2167-amino-acid polypeptide reads, in one-letter code: GTPase-activating protein BEM2/IPL2 (2167 aa).

Disordered regions lie at residues 1 to 209 (MKGL…NDNE), 243 to 305 (TNYN…ASAR), and 353 to 372 (NSSI…NNQA). Low complexity predominate over residues 12–51 (SSTASASSSSTSTSHKTTTASTASSSSPSSSSQTIRNSTS). A Glycyl lysine isopeptide (Lys-Gly) (interchain with G-Cter in ubiquitin) cross-link involves residue lysine 27. Basic residues predominate over residues 58–70 (HSHHHHGQGHSHH). Over residues 89–118 (KQYTSTSSSQVNLGMYHSDTNTRSSRSIAS) the composition is skewed to polar residues. At serine 129 the chain carries Phosphoserine. The span at 134–145 (SNSSSQKSNAQD) shows a compositional bias: polar residues. Composition is skewed to low complexity over residues 160-177 (SLLP…SRCS) and 187-207 (NTSG…NNND). The segment covering 243–252 (TNYNSSMTAP) has biased composition (polar residues). Phosphoserine is present on serine 283. The segment covering 289–300 (SSSTTATNSGND) has biased composition (low complexity). The Ras-GEF domain maps to 592 to 859 (DITTLADEVH…MKLSVQHEPP (268 aa)). A phosphoserine mark is found at serine 1012 and serine 1016. Threonine 1038 bears the Phosphothreonine mark. Phosphoserine occurs at positions 1046, 1054, and 1128. The span at 1771 to 1794 (ISGTHSDNDHSYNINKNTGQTPSL) shows a compositional bias: polar residues. Positions 1771-1828 (ISGTHSDNDHSYNINKNTGQTPSLGSVMESNNSARNRRDSRASFSTNRSSVVSNSSHN) are disordered. Low complexity predominate over residues 1812 to 1828 (ASFSTNRSSVVSNSSHN). Residues 1846 to 1948 (GFNTSSSNYS…WIKMIKASKR (103 aa)) form the PH domain. A Rho-GAP domain is found at 1967–2165 (VPLEDVCERE…DFIKNPNDYF (199 aa)).

Functionally, GTPase-activating protein (GAP) for RHO1 and RHO2. Involved in the control of cellular morphogenesis. Required for proper bud site selection and bud emergence. The polypeptide is GTPase-activating protein BEM2/IPL2 (BEM2) (Saccharomyces cerevisiae (strain ATCC 204508 / S288c) (Baker's yeast)).